A 424-amino-acid polypeptide reads, in one-letter code: Serine--tRNA ligase (424 aa).

Position 229 to 231 (229 to 231 (TAE)) interacts with L-serine. ATP contacts are provided by residues 259–261 (RKE) and valine 275. Glutamate 282 contributes to the L-serine binding site. An ATP-binding site is contributed by 349-352 (EVTS). An L-serine-binding site is contributed by threonine 383.

The protein belongs to the class-II aminoacyl-tRNA synthetase family. Type-1 seryl-tRNA synthetase subfamily. Homodimer. The tRNA molecule binds across the dimer.

The protein localises to the cytoplasm. The catalysed reaction is tRNA(Ser) + L-serine + ATP = L-seryl-tRNA(Ser) + AMP + diphosphate + H(+). It carries out the reaction tRNA(Sec) + L-serine + ATP = L-seryl-tRNA(Sec) + AMP + diphosphate + H(+). It functions in the pathway aminoacyl-tRNA biosynthesis; selenocysteinyl-tRNA(Sec) biosynthesis; L-seryl-tRNA(Sec) from L-serine and tRNA(Sec): step 1/1. Functionally, catalyzes the attachment of serine to tRNA(Ser). Is also able to aminoacylate tRNA(Sec) with serine, to form the misacylated tRNA L-seryl-tRNA(Sec), which will be further converted into selenocysteinyl-tRNA(Sec). The polypeptide is Serine--tRNA ligase (Borrelia recurrentis (strain A1)).